The sequence spans 205 residues: Interleukin-6 (205 aa).

The signal sequence occupies residues 1–21; sequence RFTSAFSLGLLLVTATAFPTP. An intrachain disulfide couples C64 to C70. Residue S73 is modified to Phosphoserine. A disulfide bond links C93 and C103. N-linked (GlcNAc...) asparagine glycosylation is present at N164.

It belongs to the IL-6 superfamily. In terms of assembly, component of a hexamer of two molecules each of IL6, IL6R and IL6ST; first binds to IL6R to associate with the signaling subunit IL6ST. Interacts with IL6R (via the N-terminal ectodomain); this interaction may be affected by IL6R-binding with SORL1, hence decreasing IL6 cis signaling. Interacts with SORL1 (via the N-terminal ectodomain); this interaction leads to IL6 internalization and lysosomal degradation. May form a trimeric complex with the soluble SORL1 ectodomain and soluble IL6R receptor; this interaction might stabilize circulating IL6, hence promoting IL6 trans signaling.

The protein resides in the secreted. Cytokine with a wide variety of biological functions in immunity, tissue regeneration, and metabolism. Binds to IL6R, then the complex associates to the signaling subunit IL6ST/gp130 to trigger the intracellular IL6-signaling pathway. The interaction with the membrane-bound IL6R and IL6ST stimulates 'classic signaling', whereas the binding of IL6 and soluble IL6R to IL6ST stimulates 'trans-signaling'. Alternatively, 'cluster signaling' occurs when membrane-bound IL6:IL6R complexes on transmitter cells activate IL6ST receptors on neighboring receiver cells. Its function is as follows. IL6 is a potent inducer of the acute phase response. Rapid production of IL6 contributes to host defense during infection and tissue injury, but excessive IL6 synthesis is involved in disease pathology. In the innate immune response, is synthesized by myeloid cells, such as macrophages and dendritic cells, upon recognition of pathogens through toll-like receptors (TLRs) at the site of infection or tissue injury. In the adaptive immune response, is required for the differentiation of B cells into immunoglobulin-secreting cells. Plays a major role in the differentiation of CD4(+) T cell subsets. Essential factor for the development of T follicular helper (Tfh) cells that are required for the induction of germinal-center formation. Required to drive naive CD4(+) T cells to the Th17 lineage. Also required for proliferation of myeloma cells and the survival of plasmablast cells. Functionally, acts as an essential factor in bone homeostasis and on vessels directly or indirectly by induction of VEGF, resulting in increased angiogenesis activity and vascular permeability. Induces, through 'trans-signaling' and synergistically with IL1B and TNF, the production of VEGF. Involved in metabolic controls, is discharged into the bloodstream after muscle contraction increasing lipolysis and improving insulin resistance. 'Trans-signaling' in central nervous system also regulates energy and glucose homeostasis. Mediates, through GLP-1, crosstalk between insulin-sensitive tissues, intestinal L cells and pancreatic islets to adapt to changes in insulin demand. Also acts as a myokine. Plays a protective role during liver injury, being required for maintenance of tissue regeneration. Also has a pivotal role in iron metabolism by regulating HAMP/hepcidin expression upon inflammation or bacterial infection. Through activation of IL6ST-YAP-NOTCH pathway, induces inflammation-induced epithelial regeneration. This chain is Interleukin-6 (IL6), found in Orcinus orca (Killer whale).